The sequence spans 291 residues: UTP--glucose-1-phosphate uridylyltransferase (291 aa).

This sequence belongs to the UDPGP type 2 family.

It catalyses the reaction alpha-D-glucose 1-phosphate + UTP + H(+) = UDP-alpha-D-glucose + diphosphate. Its function is as follows. May play a role in stationary phase survival. The sequence is that of UTP--glucose-1-phosphate uridylyltransferase (galU) from Mycoplasma pneumoniae (strain ATCC 29342 / M129 / Subtype 1) (Mycoplasmoides pneumoniae).